Reading from the N-terminus, the 141-residue chain is Sperm protein associated with the nucleus on the X chromosome N3 (141 aa).

A compositionally biased stretch (polar residues) spans 1–10; the sequence is MEQPTSSTNG. Disordered regions lie at residues 1–47 and 66–141; these read MEQP…TKTS and NQLE…SGED. A compositionally biased stretch (basic and acidic residues) spans 11 to 26; that stretch reads EKTKSPCESNNKKNDE. Residues 66–80 are compositionally biased toward polar residues; that stretch reads NQLENEQSQENSINP. Acidic residues predominate over residues 84–103; sequence EEDEGVDLSEGSSNEDEDLG. Over residues 132–141 the composition is skewed to polar residues; the sequence is EGSSQDSGED.

It belongs to the SPAN-X family.

This chain is Sperm protein associated with the nucleus on the X chromosome N3 (SPANXN3), found in Homo sapiens (Human).